A 115-amino-acid chain; its full sequence is Guanylin (115 aa).

The N-terminal stretch at 1-23 (MNAWLLSVLCLLGALAVLVEGVT) is a signal peptide. The propeptide occupies 24–100 (VQDGDLSFPL…LQRLEAIAQD (77 aa)). 3 disulfides stabilise this stretch: Cys69/Cys82, Cys104/Cys112, and Cys107/Cys115.

This sequence belongs to the guanylin family. Intestine and in low abundance in adrenal gland, kidney, and uterus/oviduct.

Its subcellular location is the secreted. In terms of biological role, endogenous activator of intestinal guanylate cyclase. It stimulates this enzyme through the same receptor binding region as the heat-stable enterotoxins. In Rattus norvegicus (Rat), this protein is Guanylin (Guca2a).